The following is a 339-amino-acid chain: 4-amino-5-hydroxymethyl-2-methylpyrimidine phosphate synthase (339 aa).

K62 bears the N6-(pyridoxal phosphate)lysine mark. H66 is an active-site residue. Pyridoxal 5'-phosphate is bound at residue 115 to 118 (GEFG). The short motif at 195–199 (CCCFC) is the CCCFC; essential for catalytic activity, may be the site of iron coordination element.

It belongs to the NMT1/THI5 family. In terms of assembly, homodimer. It depends on Fe(3+) as a cofactor.

The enzyme catalyses N(6)-(pyridoxal phosphate)-L-lysyl-[4-amino-5-hydroxymethyl-2-methylpyrimidine phosphate synthase] + L-histidyl-[4-amino-5-hydroxymethyl-2-methylpyrimidine phosphate synthase] + 2 Fe(3+) + 4 H2O = L-lysyl-[4-amino-5-hydroxymethyl-2-methylpyrimidine phosphate synthase] + (2S)-2-amino-5-hydroxy-4-oxopentanoyl-[4-amino-5-hydroxymethyl-2-methylpyrimidine phosphate synthase] + 4-amino-2-methyl-5-(phosphooxymethyl)pyrimidine + 3-oxopropanoate + 2 Fe(2+) + 2 H(+). The protein operates within cofactor biosynthesis; thiamine diphosphate biosynthesis. Responsible for the formation of the pyrimidine heterocycle in the thiamine biosynthesis pathway. Catalyzes the formation of hydroxymethylpyrimidine phosphate (HMP-P) from histidine and pyridoxal phosphate (PLP). The protein uses PLP and the active site histidine to form HMP-P, generating an inactive enzyme. The enzyme can only undergo a single turnover, which suggests it is a suicide enzyme. This chain is 4-amino-5-hydroxymethyl-2-methylpyrimidine phosphate synthase, found in Candida albicans (strain WO-1) (Yeast).